Reading from the N-terminus, the 843-residue chain is F-box only protein 11 (843 aa).

A disordered region spans residues Met1 to Ser63. The span at Pro30–Asn45 shows a compositional bias: polar residues. The 47-residue stretch at Gln69 to Leu115 folds into the F-box domain. PbH1 repeat units lie at residues Gly311–Asp333, His334–Asn356, His357–Asp379, His380–Ala402, Tyr403–Glu425, Lys426–Ser448, Asn449–Gly471, Asp472–Thr494, Asn495–Glu517, Lys518–Thr540, Gly541–Asp563, Asn564–Thr586, Gly587–Asn609, Ser610–Thr632, Asp633–Asn655, Gly656–Thr678, Asn679–Asn701, His702–Ser724, and Gly725–Val746. The UBR-type zinc finger occupies Gly749–Glu820.

In terms of assembly, component of the SCF(FBXO11) complex consisting of CUL1, RBX1, SKP1 and FBXO11. Interacts with CIITA.

It localises to the nucleus. The protein localises to the chromosome. It participates in protein modification; protein ubiquitination. In terms of biological role, substrate recognition component of a SCF (SKP1-CUL1-F-box protein) E3 ubiquitin-protein ligase complex which mediates the ubiquitination and subsequent proteasomal degradation of target proteins, such as DTL/CDT2, BCL6, SNAI1 and PRDM1/BLIMP1. The SCF(FBXO11) complex mediates ubiquitination and degradation of BCL6, thereby playing a role in the germinal center B-cells terminal differentiation toward memory B-cells and plasma cells. The SCF(FBXO11) complex also mediates ubiquitination and degradation of DTL, an important step for the regulation of TGF-beta signaling, cell migration and the timing of the cell-cycle progression and exit. The SCF(FBXO11) complex also catalyzes ubiquitination and degradation of GSK3B-phosphorylated SNAI1. Binds to and neddylates phosphorylated p53/TP53, inhibiting its transcriptional activity. Plays a role in the regulatiom of erythropoiesis but not myelopoiesis or megakaryopoiesis. Mechanistically, activates erythroid genes by mediating the degradation of BAHD1, a heterochromatin-associated protein that recruits corepressors to H3K27me3 marks. Participates in macrophage cell death and inflammation in response to bacterial toxins by regulating the expression of complement 5a receptor 1/C5AR1 and IL-1beta. Acts as a critical regulator to determine the level of MHC-II by mediating the recognition of degron at the P/S/T domain of CIITA leading to its ubiquitination and subsequent degradation via the proteasome. Participates in the antiviral repsonse by initiating the activation of TBK1-IRF3-IFN-I axis. Mediates the 'Lys-63'-linked ubiquitination of TRAF3 to strengthen the interaction between TRAF3 and TBK1. This is F-box only protein 11 (Fbxo11) from Rattus norvegicus (Rat).